The sequence spans 969 residues: Activity-dependent neuroprotective protein a (969 aa).

The C2H2-type 1 zinc finger occupies 74–97; that stretch reads FCCSDCPFASKYFSAYKNHFRNVH. The C2H2-type 2; atypical zinc-finger motif lies at 107–129; that stretch reads LNCSYCTYSGNKRTLETHVRLFH. 2 C2H2-type zinc fingers span residues 169 to 192 and 221 to 244; these read YYCKKCTYRDRLYNVVRRHIYREH and IHCKSCHFTPRSYEALVQHVIEFH. A C2H2-type 5; atypical zinc finger spans residues 401-423; the sequence is KICTICNELFPESAYSAHFEKEH. The C2H2-type 6; atypical zinc-finger motif lies at 443–464; that stretch reads SKCLYCNRYLPSDSLLNHMLVH. The C2H2-type 7 zinc finger occupies 466 to 489; sequence LSCPHCHSTFHEVEKIVAHNRLAH. The C2H2-type 8; atypical zinc finger occupies 583–608; that stretch reads TLCPLCFTILKGPISDALAHHLRDSH. Residues 623-647 form a C2H2-type 9; atypical zinc finger; that stretch reads YKCIHCLGVYTSNMTASTITLHLVH. The disordered stretch occupies residues 659-689; it reads KPITTGLRSPGAGSLKRELVTPDPSDPKRRK. The segment at residues 732-774 is a DNA-binding region (homeobox); sequence AYFNRHPYPSQREVEKLAASLWLWKSDVASHFGNHRRLCDRDF. The interval 911-949 is disordered; it reads DVRANRSSPRVGPKVLDGSVSSSSPDEATWSGNMSSEES. Over residues 929-946 the composition is skewed to polar residues; the sequence is SVSSSSPDEATWSGNMSS.

Interacts with catenin beta-1/ctnnb1.

The protein resides in the nucleus. May be involved in transcriptional regulation. Positively modulates wnt-beta-catenin/ctnnb1 signaling. Required for embryonic neurogenesis. Required for progression through late erythroid differentiation. The chain is Activity-dependent neuroprotective protein a from Danio rerio (Zebrafish).